The following is a 133-amino-acid chain: UPF0225 protein BB3385 (133 aa).

Belongs to the UPF0225 family.

This is UPF0225 protein BB3385 from Bordetella bronchiseptica (strain ATCC BAA-588 / NCTC 13252 / RB50) (Alcaligenes bronchisepticus).